The sequence spans 88 residues: MAHKKGASSSRNGRDSAAQRLGVKRFGGQVVKAGEILVRQRGTKFHPGVNVGRGGDDTLFATSAGAVEFGVKRGRKTVNIVAVGLTAD.

This sequence belongs to the bacterial ribosomal protein bL27 family.

This chain is Large ribosomal subunit protein bL27, found in Mycobacterium leprae (strain TN).